Reading from the N-terminus, the 202-residue chain is LexA repressor (202 aa).

The segment at residues 28 to 48 is a DNA-binding region (H-T-H motif); sequence RAEIAQRLGFRSPNAAEEHLK. Active-site for autocatalytic cleavage activity residues include serine 119 and lysine 156.

It belongs to the peptidase S24 family. Homodimer.

It catalyses the reaction Hydrolysis of Ala-|-Gly bond in repressor LexA.. Represses a number of genes involved in the response to DNA damage (SOS response), including recA and lexA. Binds to the 16 bp palindromic sequence 5'-CTGTATATATATACAG-3'. In the presence of single-stranded DNA, RecA interacts with LexA causing an autocatalytic cleavage which disrupts the DNA-binding part of LexA, leading to derepression of the SOS regulon and eventually DNA repair. The chain is LexA repressor from Klebsiella pneumoniae subsp. pneumoniae (strain ATCC 700721 / MGH 78578).